We begin with the raw amino-acid sequence, 330 residues long: DNA-directed RNA polymerase subunit alpha (330 aa).

Positions M1 to K237 are alpha N-terminal domain (alpha-NTD). Positions F251–E330 are alpha C-terminal domain (alpha-CTD).

The protein belongs to the RNA polymerase alpha chain family. In terms of assembly, homodimer. The RNAP catalytic core consists of 2 alpha, 1 beta, 1 beta' and 1 omega subunit. When a sigma factor is associated with the core the holoenzyme is formed, which can initiate transcription.

It catalyses the reaction RNA(n) + a ribonucleoside 5'-triphosphate = RNA(n+1) + diphosphate. DNA-dependent RNA polymerase catalyzes the transcription of DNA into RNA using the four ribonucleoside triphosphates as substrates. This is DNA-directed RNA polymerase subunit alpha from Legionella pneumophila (strain Paris).